The chain runs to 901 residues: HTH-type transcriptional regulator MalT (901 aa).

39–46 (SPAGYGKT) serves as a coordination point for ATP. An HTH luxR-type domain is found at 829–894 (ELIRTSPLTQ…AAVQHAQKLL (66 aa)). The segment at residues 853-872 (NEQIAGELEVAATTIKTHIR) is a DNA-binding region (H-T-H motif).

The protein belongs to the MalT family. Monomer in solution. Oligomerizes to an active state in the presence of the positive effectors ATP and maltotriose.

With respect to regulation, activated by ATP and maltotriose, which are both required for DNA binding. Positively regulates the transcription of the maltose regulon whose gene products are responsible for uptake and catabolism of malto-oligosaccharides. Specifically binds to the promoter region of its target genes, recognizing a short DNA motif called the MalT box. This chain is HTH-type transcriptional regulator MalT, found in Escherichia coli O6:H1 (strain CFT073 / ATCC 700928 / UPEC).